A 126-amino-acid polypeptide reads, in one-letter code: Large ribosomal subunit protein bL12 (126 aa).

It belongs to the bacterial ribosomal protein bL12 family. As to quaternary structure, homodimer. Part of the ribosomal stalk of the 50S ribosomal subunit. Forms a multimeric L10(L12)X complex, where L10 forms an elongated spine to which 2 to 4 L12 dimers bind in a sequential fashion. Binds GTP-bound translation factors.

Functionally, forms part of the ribosomal stalk which helps the ribosome interact with GTP-bound translation factors. Is thus essential for accurate translation. In Bordetella petrii (strain ATCC BAA-461 / DSM 12804 / CCUG 43448), this protein is Large ribosomal subunit protein bL12.